We begin with the raw amino-acid sequence, 114 residues long: Large ribosomal subunit protein bL19 (114 aa).

This sequence belongs to the bacterial ribosomal protein bL19 family.

Functionally, this protein is located at the 30S-50S ribosomal subunit interface and may play a role in the structure and function of the aminoacyl-tRNA binding site. The sequence is that of Large ribosomal subunit protein bL19 from Lysinibacillus sphaericus (strain C3-41).